Reading from the N-terminus, the 160-residue chain is MDSPRGISTATGDAHAEAAVSPAAEIQIKTEAPDVDGPEATTECLDHTYTQQTSGGDGLDAIDTDDLLEMVLTSENTESEPGIPFALRGNFICCRDDNCRACRELPFRPSVIGFSRDPHVSMALDMTSGNWAYVPRVFPDTPTAPWMANYCIPDLDEHAD.

Residues 1-11 are compositionally biased toward polar residues; the sequence is MDSPRGISTAT. The segment at 1-26 is disordered; it reads MDSPRGISTATGDAHAEAAVSPAAEI.

The protein is Gene 34 protein of Equus caballus (Horse).